The chain runs to 443 residues: Protoheme IX farnesyltransferase, mitochondrial (443 aa).

The disordered stretch occupies residues 68-113; it reads LSQRVKPKPEPPASPFLEHTSSGQARADEDELPSFPAPSRPLSRKP. A run of 7 helical transmembrane segments spans residues 174–194, 230–250, 252–272, 286–306, 308–328, 363–383, and 410–430; these read AGFA…TSLG, ISPL…VALL, WGVN…YTCC, VGAV…TGSL, AGAL…FNAL, LIAL…FPVI, and LFFC…TCKQ.

The protein belongs to the UbiA prenyltransferase family.

The protein resides in the mitochondrion membrane. It catalyses the reaction heme b + (2E,6E)-farnesyl diphosphate + H2O = Fe(II)-heme o + diphosphate. In terms of biological role, converts protoheme IX and farnesyl diphosphate to heme O. The polypeptide is Protoheme IX farnesyltransferase, mitochondrial (Cox10) (Mus musculus (Mouse)).